The sequence spans 954 residues: Alpha-xylosidase BoGH31A (954 aa).

Positions 1–20 (MIMNMKNIFYCLLPGLLLGA) are cleaved as a signal peptide. A lipid anchor (N-palmitoyl cysteine) is attached at Cys-21. Residue Cys-21 is the site of S-diacylglycerol cysteine attachment. The PA14 domain occupies 227–366 (TGQEGALTGT…NPEEQGKQSW (140 aa)). Residues Asp-553 and Glu-556 contribute to the active site. The active-site Proton donor is Asp-630.

This sequence belongs to the glycosyl hydrolase 31 family.

It is found in the cell inner membrane. The enzyme catalyses Hydrolysis of terminal, non-reducing alpha-D-xylose residues with release of alpha-D-xylose.. It participates in glucan metabolism; xyloglucan degradation. In terms of biological role, catalyzes the liberation of alpha-xylose from the non-reducing terminal glucose of xyloglucan oligosaccharides in xyloglucan degradation, converting the 'X' to 'G' units. The polypeptide is Alpha-xylosidase BoGH31A (Bacteroides ovatus (strain ATCC 8483 / DSM 1896 / JCM 5824 / BCRC 10623 / CCUG 4943 / NCTC 11153)).